We begin with the raw amino-acid sequence, 631 residues long: Probable basic-leucine zipper transcription factor F (631 aa).

Residues 35–62 (KKNANVFNNFQQQQQQIQQQNKQSNGLI) adopt a coiled-coil conformation. Disordered regions lie at residues 46–117 (QQQQ…HNNI), 154–207 (LNNS…NNQF), and 264–406 (MLNV…ERHQ). Composition is skewed to low complexity over residues 155-206 (NNSY…NNNQ) and 271-360 (NNAN…GSNN). Residues 328-366 (NNNNNNSNNISTQINNLNNNINNQNNQLNGSNNGKKKEE) are a coiled coil. The bZIP domain maps to 405 to 468 (HQKRQRRLVK…KLIREQLLYL (64 aa)). The interval 407–427 (KRQRRLVKNREAAQLFRQRQK) is basic motif. The tract at residues 433 to 440 (LEKKVSDL) is leucine-zipper. The disordered stretch occupies residues 546-631 (QGNLLGTPIP…PPQQSTPNQR (86 aa)). Low complexity-rich tracts occupy residues 563-609 (SNSG…PNSS) and 618-631 (PQNT…PNQR).

The protein belongs to the bZIP family.

The protein localises to the nucleus. Functionally, probable transcriptional regulator. The polypeptide is Probable basic-leucine zipper transcription factor F (bzpF) (Dictyostelium discoideum (Social amoeba)).